We begin with the raw amino-acid sequence, 291 residues long: Ecto-ADP-ribosyltransferase 5 (291 aa).

An N-terminal signal peptide occupies residues 1 to 22; that stretch reads MALAALMIALGSLGLHTWQAQA. Cys42 and Cys258 are joined by a disulfide. The TR mART core domain occupies 62–252; sequence ALLRESWEAA…LVTLWSYNQT (191 aa). Tyr99 contacts NAD(+). The N-linked (GlcNAc...) asparagine glycan is linked to Asn101. Positions 160 and 180 each coordinate NAD(+). The active site involves Arg160. Residue Ser183 is part of the active site. N-linked (GlcNAc...) asparagine glycosylation occurs at Asn196. NAD(+) is bound at residue Ser214. The active site involves Glu221. Asn250 carries N-linked (GlcNAc...) asparagine glycosylation.

Belongs to the Arg-specific ADP-ribosyltransferase family.

The protein resides in the secreted. The enzyme catalyses L-arginyl-[protein] + NAD(+) = N(omega)-(ADP-D-ribosyl)-L-arginyl-[protein] + nicotinamide + H(+). In Homo sapiens (Human), this protein is Ecto-ADP-ribosyltransferase 5 (ART5).